The following is a 682-amino-acid chain: 1,4-alpha-glucan-branching enzyme (682 aa).

(1,4-alpha-D-glucosyl)n-binding residues include W88 and K124. D342 (nucleophile) is an active-site residue. Catalysis depends on E397, which acts as the Proton donor.

The protein belongs to the glycosyl hydrolase 13 family. GlgB subfamily.

It is found in the cytoplasm. The catalysed reaction is Transfers a segment of a (1-&gt;4)-alpha-D-glucan chain to a primary hydroxy group in a similar glucan chain.. The protein operates within glycan biosynthesis; glycogen biosynthesis. Glycogen-branching enzyme participates in the glycogen biosynthetic process along with glycogenin and glycogen synthase. Generates alpha-1,6-glucosidic branches from alpha-1,4-linked glucose chains, to increase solubility of the glycogen polymer. The polypeptide is 1,4-alpha-glucan-branching enzyme (GLC3) (Cryptococcus neoformans var. neoformans serotype D (strain B-3501A) (Filobasidiella neoformans)).